Reading from the N-terminus, the 330-residue chain is Trans-1,2-dihydrobenzene-1,2-diol dehydrogenase (330 aa).

Belongs to the Gfo/Idh/MocA family. Homodimer.

The enzyme catalyses (1R,2R)-1,2-dihydrobenzene-1,2-diol + NADP(+) = catechol + NADPH + H(+). The catalysed reaction is D-xylose + NADP(+) = D-xylono-1,5-lactone + NADPH + H(+). The sequence is that of Trans-1,2-dihydrobenzene-1,2-diol dehydrogenase (dhdh) from Xenopus laevis (African clawed frog).